Reading from the N-terminus, the 57-residue chain is DNA-directed RNA polymerase subunit Rpo6 (57 aa).

The protein belongs to the archaeal Rpo6/eukaryotic RPB6 RNA polymerase subunit family. In terms of assembly, part of the RNA polymerase complex.

It is found in the cytoplasm. It carries out the reaction RNA(n) + a ribonucleoside 5'-triphosphate = RNA(n+1) + diphosphate. Its function is as follows. DNA-dependent RNA polymerase (RNAP) catalyzes the transcription of DNA into RNA using the four ribonucleoside triphosphates as substrates. The protein is DNA-directed RNA polymerase subunit Rpo6 of Pyrococcus furiosus (strain ATCC 43587 / DSM 3638 / JCM 8422 / Vc1).